The primary structure comprises 164 residues: Large ribosomal subunit protein uL11 (164 aa).

It belongs to the universal ribosomal protein uL11 family. Part of the ribosomal stalk of the 50S ribosomal subunit. Interacts with L10 and the large rRNA to form the base of the stalk. L10 forms an elongated spine to which L12 dimers bind in a sequential fashion forming a multimeric L10(L12)X complex.

In terms of biological role, forms part of the ribosomal stalk which helps the ribosome interact with GTP-bound translation factors. This chain is Large ribosomal subunit protein uL11, found in Pyrococcus furiosus (strain ATCC 43587 / DSM 3638 / JCM 8422 / Vc1).